The primary structure comprises 327 residues: Biotin synthase (327 aa).

Residues 44 to 273 (FMGNKFDTCS…NAFLRFSGGR (230 aa)) enclose the Radical SAM core domain. Residues Cys-62, Cys-66, and Cys-69 each coordinate [4Fe-4S] cluster. [2Fe-2S] cluster is bound by residues Cys-138, Cys-198, and Arg-268.

It belongs to the radical SAM superfamily. Biotin synthase family. In terms of assembly, homodimer. [4Fe-4S] cluster serves as cofactor. Requires [2Fe-2S] cluster as cofactor.

It carries out the reaction (4R,5S)-dethiobiotin + (sulfur carrier)-SH + 2 reduced [2Fe-2S]-[ferredoxin] + 2 S-adenosyl-L-methionine = (sulfur carrier)-H + biotin + 2 5'-deoxyadenosine + 2 L-methionine + 2 oxidized [2Fe-2S]-[ferredoxin]. The protein operates within cofactor biosynthesis; biotin biosynthesis; biotin from 7,8-diaminononanoate: step 2/2. Its function is as follows. Catalyzes the conversion of dethiobiotin (DTB) to biotin by the insertion of a sulfur atom into dethiobiotin via a radical-based mechanism. The protein is Biotin synthase of Parabacteroides distasonis (strain ATCC 8503 / DSM 20701 / CIP 104284 / JCM 5825 / NCTC 11152).